The chain runs to 184 residues: MATKLRKQPIRYDENPFIEGMVVPVKSQRVQLSRLGRDDNILVNQATGEMQGTHVTTYRRVDSEEFVKLFSTNIALTFELGAAGIKAFSVLVWILQDKGISKDLVPLDKFVLEDFLNAQEKKLALSQATFARGLAELEKAKIIAKHVRQGWYFINPNFVFNGDRVAFTTVIERKKTLQKQDESE.

In Zymomonas mobilis subsp. mobilis (strain ATCC 10988 / DSM 424 / LMG 404 / NCIMB 8938 / NRRL B-806 / ZM1), this protein is 20.9 kDa protein.